Reading from the N-terminus, the 33-residue chain is Mu-theraphotoxin-Osp1b (33 aa).

3 cysteine pairs are disulfide-bonded: Cys-2/Cys-17, Cys-9/Cys-22, and Cys-16/Cys-29.

Belongs to the neurotoxin 10 (Hwtx-1) family. 22 (Htx-4) subfamily. As to expression, expressed by the venom gland.

The protein resides in the secreted. Its function is as follows. Voltage-gated sodium channel Nav1.7/SCN9A inhibitor. This chain is Mu-theraphotoxin-Osp1b, found in Orphnaecus sp. (strain Maanghit-Cave/Philippines) (Tarantula spider).